Here is a 310-residue protein sequence, read N- to C-terminus: Glutaminase (310 aa).

Substrate is bound by residues serine 67, asparagine 118, glutamate 161, asparagine 168, tyrosine 192, tyrosine 244, and valine 262.

Belongs to the glutaminase family. As to quaternary structure, homotetramer.

It carries out the reaction L-glutamine + H2O = L-glutamate + NH4(+). The polypeptide is Glutaminase (Legionella pneumophila (strain Paris)).